Consider the following 172-residue polypeptide: Large ribosomal subunit protein uL10 (172 aa).

The protein belongs to the universal ribosomal protein uL10 family. Part of the ribosomal stalk of the 50S ribosomal subunit. The N-terminus interacts with L11 and the large rRNA to form the base of the stalk. The C-terminus forms an elongated spine to which L12 dimers bind in a sequential fashion forming a multimeric L10(L12)X complex.

In terms of biological role, forms part of the ribosomal stalk, playing a central role in the interaction of the ribosome with GTP-bound translation factors. The chain is Large ribosomal subunit protein uL10 (rplJ) from Liberibacter asiaticus (Citrus greening disease).